A 255-amino-acid polypeptide reads, in one-letter code: Small ribosomal subunit protein uS2 (255 aa).

This sequence belongs to the universal ribosomal protein uS2 family.

This chain is Small ribosomal subunit protein uS2, found in Streptococcus uberis (strain ATCC BAA-854 / 0140J).